We begin with the raw amino-acid sequence, 184 residues long: Threonylcarbamoyl-AMP synthase (184 aa).

The YrdC-like domain occupies 1-184 (MNNLENIVEQ…IFTQHIFRQG (184 aa)).

Belongs to the SUA5 family. TsaC subfamily.

It is found in the cytoplasm. The catalysed reaction is L-threonine + hydrogencarbonate + ATP = L-threonylcarbamoyladenylate + diphosphate + H2O. Functionally, required for the formation of a threonylcarbamoyl group on adenosine at position 37 (t(6)A37) in tRNAs that read codons beginning with adenine. Catalyzes the conversion of L-threonine, HCO(3)(-)/CO(2) and ATP to give threonylcarbamoyl-AMP (TC-AMP) as the acyladenylate intermediate, with the release of diphosphate. In Actinobacillus pleuropneumoniae serotype 7 (strain AP76), this protein is Threonylcarbamoyl-AMP synthase.